The sequence spans 338 residues: Calcium uniporter protein 4, mitochondrial (338 aa).

A mitochondrion-targeting transit peptide spans 1–36 (MVMMKKLLSNRLFNMSKTASQSLMNCRTSSSSSLAM). A helical transmembrane segment spans residues 233-253 (LWAGLGYLIIQTAGFMRLTFW). The Selectivity filter motif lies at 257-265 (WDVMEPICF). Glu261 contributes to the Ca(2+) binding site. The chain crosses the membrane as a helical span at residues 263 to 280 (ICFYVSSVYFMAGYTFFL).

The protein belongs to the MCU (TC 1.A.77) family.

The protein localises to the mitochondrion inner membrane. The enzyme catalyses Ca(2+)(in) = Ca(2+)(out). Mitochondrial inner membrane calcium uniporter that mediates calcium uptake into mitochondria. Constitutes a pore-forming and calcium-conducting subunit. Mitochondrial calcium homeostasis plays key roles in cellular physiology and regulates cell bioenergetics, cytoplasmic calcium signals and activation of cell death pathways. The protein is Calcium uniporter protein 4, mitochondrial of Arabidopsis thaliana (Mouse-ear cress).